The primary structure comprises 37 residues: Large ribosomal subunit protein bL36 (37 aa).

Belongs to the bacterial ribosomal protein bL36 family.

This chain is Large ribosomal subunit protein bL36, found in Nitratidesulfovibrio vulgaris (strain ATCC 29579 / DSM 644 / CCUG 34227 / NCIMB 8303 / VKM B-1760 / Hildenborough) (Desulfovibrio vulgaris).